The following is a 105-amino-acid chain: uncharacterized protein (105 aa).

Residues 1–24 form the signal peptide; it reads MYWPCLVITPFTVGESFCLLLSLG.

This is an uncharacterized protein from Saccharomyces cerevisiae (strain ATCC 204508 / S288c) (Baker's yeast).